Reading from the N-terminus, the 765-residue chain is Single-minded homolog 1 (765 aa).

A bHLH domain is found at 1 to 53; the sequence is MKEKSKNAARTRREKENSEFYELAKLLPLPSAITSQLDKASIIRLTTSYLKMR. PAS domains follow at residues 77-147 and 218-288; these read GREL…QPYH and PPSA…LVKG. Residues 292-335 enclose the PAC domain; it reads TKYYRFLAKQGGWVWVQSYATIVHNSRSSRPHCIVSVNYVLTDT. Residues 336–765 enclose the Single-minded C-terminal domain; the sequence is EYKGLQLSLD…GTSVIITNGS (430 aa). Composition is skewed to low complexity over residues 352–365 and 373–385; these read PTFSYTSSSTPTIS and SRLSSSKSKSRTS. 2 disordered regions span residues 352 to 428 and 527 to 560; these read PTFS…PGSQ and WDEDSVVSSPDPGSASESGDRYRTEQYQNSPHEP. The short motif at 368–387 is the Nuclear localization signal element; the sequence is RKGAKSRLSSSKSKSRTSPY. Positions 394–404 are enriched in basic and acidic residues; the sequence is HTERSESDHDS.

As to quaternary structure, efficient DNA binding requires dimerization with another bHLH protein. Heterodimer; forms a heterodimer with ARNT, ARNT2. Detected in lung, skeletal muscle and kidney. During fetal development it is found in the CNS, developing kidney, mesodermal and endodermal tissues, including developing somites, mesonephric duct, and foregut.

The protein localises to the nucleus. Its function is as follows. Transcriptional factor that may have pleiotropic effects during embryogenesis and in the adult. This is Single-minded homolog 1 (Sim1) from Mus musculus (Mouse).